A 446-amino-acid chain; its full sequence is D(1A) dopamine receptor (446 aa).

Topologically, residues 1–22 are extracellular; it reads MPLNDTTMDRRGLVVERDFSFR. A glycan (N-linked (GlcNAc...) asparagine) is linked at Asn4. The helical transmembrane segment at 23–48 threads the bilayer; it reads ILTACFLSLLILSTLLGNTLVCAAVI. At 49–59 the chain is on the cytoplasmic side; it reads RFRHLRSKVTN. Residues 60 to 86 traverse the membrane as a helical segment; it reads FFVISLAVSDLLVAVLVMPWKAVAEIA. Over 87–95 the chain is Extracellular; that stretch reads GFWPFGSFC. Cys95 and Cys185 are joined by a disulfide. The helical transmembrane segment at 96–118 threads the bilayer; sequence NIWVAFDIMCSTASILNLCVISV. The Cytoplasmic portion of the chain corresponds to 119-137; sequence DRYWAISSPFRYERKMTPK. A helical transmembrane segment spans residues 138 to 162; it reads AAFILISVAWTLSVLISFIPVQLNW. The Extracellular segment spans residues 163–191; it reads HKARPLSSPDGNVSSQDETMDNCDSSLSR. The helical transmembrane segment at 192–217 threads the bilayer; the sequence is TYAISSSLISFYIPVAIMIVTYTRIY. The Cytoplasmic portion of the chain corresponds to 218-271; it reads RIAQKQIRRISALERAAVHAKNCQNTTGNGANVECSQPESSFKMSFKRETKVLK. A helical transmembrane segment spans residues 272 to 298; sequence TLSVIMGVFVCCWLPFFILNCMVPFCE. Topologically, residues 299–315 are extracellular; that stretch reads SDLPSGETKPFCIDSIT. The chain crosses the membrane as a helical span at residues 316–340; that stretch reads FDVFVWFGWANSSLNPIIYAFNADF. Residues 341-446 lie on the Cytoplasmic side of the membrane; the sequence is RKAFSTLLGC…PITQNGQHKT (106 aa). 2 S-palmitoyl cysteine lipidation sites follow: Cys350 and Cys354.

The protein belongs to the G-protein coupled receptor 1 family. In terms of assembly, interacts with DNAJC14 via its C-terminus.

Its subcellular location is the cell membrane. The protein localises to the endoplasmic reticulum membrane. The protein resides in the cell projection. It localises to the cilium membrane. It is found in the dendrite. Its subcellular location is the dendritic spine. This is one of the five types (D1 to D5) of receptors for dopamine. The activity of this receptor is mediated by G proteins which activate adenylyl cyclase. This is D(1A) dopamine receptor (DRD1) from Didelphis virginiana (North American opossum).